The primary structure comprises 140 residues: Putative pre-16S rRNA nuclease (140 aa).

It belongs to the YqgF nuclease family.

Its subcellular location is the cytoplasm. In terms of biological role, could be a nuclease involved in processing of the 5'-end of pre-16S rRNA. This is Putative pre-16S rRNA nuclease from Edwardsiella ictaluri (strain 93-146).